Reading from the N-terminus, the 170-residue chain is Disulfide bond formation protein B 1 (170 aa).

Residues 1 to 14 lie on the Cytoplasmic side of the membrane; the sequence is MNDYTLAIRRERRL. A helical transmembrane segment spans residues 15-31; the sequence is LMLLGWVCIALLAGALY. Over 32-49 the chain is Periplasmic; that stretch reads LQYVKNEDPCPLCIIQRY. C41 and C44 are joined by a disulfide. A helical membrane pass occupies residues 50-64; that stretch reads FFCAIGIFAFLAAGI. Residues 65–71 are Cytoplasmic-facing; the sequence is RNWRGVW. A helical transmembrane segment spans residues 72–89; it reads VLELLIAIAAAGGVGTAA. The Periplasmic segment spans residues 90-144; the sequence is RHLTIQMNPGFSCGFDTLQPIVDSLPPAQWFPGMFKVAGLCETVYPPIFGILLPG. A disulfide bridge connects residues C102 and C130. The chain crosses the membrane as a helical span at residues 145 to 163; sequence WSLIGFAVILIAVVASLWR. Residues 164-170 are Cytoplasmic-facing; it reads HRRKLVG.

It belongs to the DsbB family.

The protein localises to the cell inner membrane. Functionally, required for disulfide bond formation in some periplasmic proteins. Acts by oxidizing the DsbA protein. This Burkholderia lata (strain ATCC 17760 / DSM 23089 / LMG 22485 / NCIMB 9086 / R18194 / 383) protein is Disulfide bond formation protein B 1.